We begin with the raw amino-acid sequence, 843 residues long: MRVREMQRNWQHLGKWGLLFLGILIICNANATDDLWVTVYYGVPVWKEPTTTLFCASDAKAYDPEVHNVWATYACVPTDPNPQELVLGNVTENFNMWENNMVDQMHLDIISLWDQSLKPCVKSTPLCVTLNCTDVNITMSDINGTSLKEDQGEIKNCSFNVTTELKDKKRKQQALFYRLDVEPIKNSSNIYKLISCNMSTVTQACPKVSFDPIPIHYCAPAGYAILKCNDKRFNGTGPCEKVSTVQCTHGIRPVVSTQLLLNGSLAQEDIIIRSKNITDNTKNIIVQFNRSVIIDCRRPNNNTRKGIRIGPGQTFFATGEIIGDIRKAYCNINRTLWNETLKNVSGEFKKHFNFSVAFNSSSGGDVEITTHSFNCRGEFFYYNTSGLFNETEVANNTNENITLPCRIRQFVNMWQRIGRAMYAPPIEGEIQCTSNITGLLLTRDGSKDIDGKEILRPIGGDMRDNWRSELYKYKVVRIEPVGVAPTKAKRRVVQRAKRAVGMGAVLFGFLGAAGSTMGAAAITLTAQARQLLSGIVQQQSNLLKAIEAQQHLLQLTVWGIKQLQARILAVERYLKDQQLLGIWGCSGKLICTTNVRWNSSWSNKSYDDIWDNMTWMQWEKEIDNYTKTIYSLIEDAQNQQERNEQELLALDKWDSLWSWFSITNWLWYIKIFIMIVGGLIGLRIVFAVLSVVNRVRQGYSPLSLQTLIPNPRGPDRPGGIEEEGGEPDRDRSMRLVSGFLPLTWDDLRSLCSFSYRHLRDLLLIAARTVDRGVKGGWEALKYLWNLTQHWGRELKNSAISLFDTIAIAVAEGTDRIIEVLQRAGRAVLHIPRRIRQGAERFLL.

A signal peptide spans 1–33; that stretch reads MRVREMQRNWQHLGKWGLLFLGILIICNANATD. A glycan (N-linked (GlcNAc...) asparagine; by host) is linked at N30. Over 34 to 671 the chain is Extracellular; it reads DLWVTVYYGV…ITNWLWYIKI (638 aa). C55 and C75 are disulfide-bonded. Residues N89, N131, N136, N143, N156, N160, N186, N197, N234, N262, N276, N289, N301, N333, N338, N343, N353, and N359 are each glycosylated (N-linked (GlcNAc...) asparagine; by host). 5 disulfides stabilise this stretch: C120–C205, C127–C196, C132–C157, C218–C247, and C228–C239. Positions 132–156 are V1; it reads CTDVNITMSDINGTSLKEDQGEIKN. The segment at 157–196 is V2; it reads CSFNVTTELKDKKRKQQALFYRLDVEPIKNSSNIYKLISC. Positions 296 to 329 are V3; it reads CRRPNNNTRKGIRIGPGQTFFATGEIIGDIRKAY. An intrachain disulfide couples C296 to C330. Residues 361-371 are CD4-binding loop; sequence SSGGDVEITTH. C375 and C432 form a disulfide bridge. Positions 382–405 are V4; that stretch reads YNTSGLFNETEVANNTNENITLPC. N-linked (GlcNAc...) asparagine; by host glycosylation is found at N383, N389, N395, N400, and N435. 2 V5 regions span residues 448 to 458 and 450 to 458; these read DIDGKEILRPI and DGKEILRPI. The tract at residues 499 to 519 is fusion peptide; that stretch reads AVGMGAVLFGFLGAAGSTMGA. The interval 561 to 579 is immunosuppression; that stretch reads KQLQARILAVERYLKDQQL. Residues C585 and C591 are joined by a disulfide bond. N-linked (GlcNAc...) asparagine; by host glycosylation is found at N598, N603, N612, and N624. The stretch at 620–654 forms a coiled coil; that stretch reads KEIDNYTKTIYSLIEDAQNQQERNEQELLALDKWD. The segment at 649 to 670 is MPER; binding to GalCer; it reads ALDKWDSLWSWFSITNWLWYIK. A helical membrane pass occupies residues 672–692; that stretch reads FIMIVGGLIGLRIVFAVLSVV. Over 693–843 the chain is Cytoplasmic; the sequence is NRVRQGYSPL…IRQGAERFLL (151 aa). Positions 699–702 match the YXXL motif; contains endocytosis signal motif; that stretch reads YSPL. The disordered stretch occupies residues 709–731; it reads PNPRGPDRPGGIEEEGGEPDRDR. C751 carries the S-palmitoyl cysteine; by host lipid modification. The Di-leucine internalization motif motif lies at 842-843; it reads LL.

Belongs to the HIV-1 env protein family. The mature envelope protein (Env) consists of a homotrimer of non-covalently associated gp120-gp41 heterodimers. The resulting complex protrudes from the virus surface as a spike. There seems to be as few as 10 spikes on the average virion. Interacts with host CD4, CCR5 and CXCR4. Gp120 also interacts with the C-type lectins CD209/DC-SIGN and CLEC4M/DC-SIGNR (collectively referred to as DC-SIGN(R)). Gp120 and gp41 interact with GalCer. Gp120 interacts with host ITGA4/ITGB7 complex; on CD4+ T-cells, this interaction results in rapid activation of integrin ITGAL/LFA-1, which facilitates efficient cell-to-cell spreading of HIV-1. Gp120 interacts with cell-associated heparan sulfate; this interaction increases virus infectivity on permissive cells and may be involved in infection of CD4- cells. As to quaternary structure, the mature envelope protein (Env) consists of a homotrimer of non-covalently associated gp120-gp41 heterodimers. The resulting complex protrudes from the virus surface as a spike. There seems to be as few as 10 spikes on the average virion. Highly glycosylated by host. The high number of glycan on the protein is reffered to as 'glycan shield' because it contributes to hide protein sequence from adaptive immune system. Post-translationally, palmitoylation of the transmembrane protein and of Env polyprotein (prior to its proteolytic cleavage) is essential for their association with host cell membrane lipid rafts. Palmitoylation is therefore required for envelope trafficking to classical lipid rafts, but not for viral replication. In terms of processing, specific enzymatic cleavages in vivo yield mature proteins. Envelope glycoproteins are synthesized as an inactive precursor that is heavily N-glycosylated and processed likely by host cell furin in the Golgi to yield the mature SU and TM proteins. The cleavage site between SU and TM requires the minimal sequence [KR]-X-[KR]-R. About 2 of the 9 disulfide bonds of gp41 are reduced by P4HB/PDI, following binding to CD4 receptor.

The protein localises to the virion membrane. Its subcellular location is the host cell membrane. The protein resides in the host endosome membrane. Functionally, oligomerizes in the host endoplasmic reticulum into predominantly trimers. In a second time, gp160 transits in the host Golgi, where glycosylation is completed. The precursor is then proteolytically cleaved in the trans-Golgi and thereby activated by cellular furin or furin-like proteases to produce gp120 and gp41. Its function is as follows. Attaches the virus to the host lymphoid cell by binding to the primary receptor CD4. This interaction induces a structural rearrangement creating a high affinity binding site for a chemokine coreceptor like CXCR4 and/or CCR5. Acts as a ligand for CD209/DC-SIGN and CLEC4M/DC-SIGNR, which are respectively found on dendritic cells (DCs), and on endothelial cells of liver sinusoids and lymph node sinuses. These interactions allow capture of viral particles at mucosal surfaces by these cells and subsequent transmission to permissive cells. HIV subverts the migration properties of dendritic cells to gain access to CD4+ T-cells in lymph nodes. Virus transmission to permissive T-cells occurs either in trans (without DCs infection, through viral capture and transmission), or in cis (following DCs productive infection, through the usual CD4-gp120 interaction), thereby inducing a robust infection. In trans infection, bound virions remain infectious over days and it is proposed that they are not degraded, but protected in non-lysosomal acidic organelles within the DCs close to the cell membrane thus contributing to the viral infectious potential during DCs' migration from the periphery to the lymphoid tissues. On arrival at lymphoid tissues, intact virions recycle back to DCs' cell surface allowing virus transmission to CD4+ T-cells. Acts as a class I viral fusion protein. Under the current model, the protein has at least 3 conformational states: pre-fusion native state, pre-hairpin intermediate state, and post-fusion hairpin state. During fusion of viral and target intracellular membranes, the coiled coil regions (heptad repeats) assume a trimer-of-hairpins structure, positioning the fusion peptide in close proximity to the C-terminal region of the ectodomain. The formation of this structure appears to drive apposition and subsequent fusion of viral and target cell membranes. Complete fusion occurs in host cell endosomes and is dynamin-dependent, however some lipid transfer might occur at the plasma membrane. The virus undergoes clathrin-dependent internalization long before endosomal fusion, thus minimizing the surface exposure of conserved viral epitopes during fusion and reducing the efficacy of inhibitors targeting these epitopes. Membranes fusion leads to delivery of the nucleocapsid into the cytoplasm. This chain is Envelope glycoprotein gp160, found in Homo sapiens (Human).